We begin with the raw amino-acid sequence, 161 residues long: Phosphopantetheine adenylyltransferase (161 aa).

Residue Thr-10 coordinates substrate. ATP-binding positions include 10 to 11 and His-18; that span reads TF. Residues Lys-42, Met-74, and Arg-88 each contribute to the substrate site. Residues 89–91, Glu-99, and 124–130 each bind ATP; these read GLR and WSFISSS.

The protein belongs to the bacterial CoaD family. Homohexamer. It depends on Mg(2+) as a cofactor.

The protein localises to the cytoplasm. It carries out the reaction (R)-4'-phosphopantetheine + ATP + H(+) = 3'-dephospho-CoA + diphosphate. The protein operates within cofactor biosynthesis; coenzyme A biosynthesis; CoA from (R)-pantothenate: step 4/5. Reversibly transfers an adenylyl group from ATP to 4'-phosphopantetheine, yielding dephospho-CoA (dPCoA) and pyrophosphate. The chain is Phosphopantetheine adenylyltransferase from Serratia marcescens.